A 388-amino-acid polypeptide reads, in one-letter code: Glucose-6-phosphate/phosphate translocator 2, chloroplastic (388 aa).

Residues 1–68 (MLSSIKPSSS…SASNFKREVK (68 aa)) constitute a chloroplast transit peptide. A run of 8 helical transmembrane segments spans residues 95–115 (LKIG…NIYN), 122–142 (FPYP…MMLV), 158–178 (FWKT…AATV), 211–231 (FPLP…LAAI), 233–253 (ELNF…AFVF), 281–301 (LVIL…AAGW), 305–325 (VSQV…FYHL), and 358–378 (IIIF…IAIF). The EamA domain maps to 113–231 (IYNKKVLNAF…IIGGCALAAI (119 aa)).

This sequence belongs to the TPT transporter family. GPT (TC 2.A.7.9) subfamily. Expressed in seeds, flowers, stamens, and rosette leaves, with highest levels found in sepals and senescing leaves.

The protein resides in the plastid. The protein localises to the chloroplast membrane. Glucose 6-phosphate (Glc6P) transporter. Also transports inorganic phosphate, 3-phosphoglycerate, triose phosphates and, to a leser extent, phosphoenolpyruvate. Responsible for the transport of Glc6P into plastids of heterotrophic tissues where it can be used as a carbon source for starch biosynthesis, as substrate for fatty acid biosynthesis or as substrate for NADPH generation via the oxidative pentose phosphate pathway (OPPP). Required for dynamic acclimation of photosynthesis and partitioning of Glc6P between the chloroplast and the cytosol. May modulate the sensing of sugar status during early seedling development. This chain is Glucose-6-phosphate/phosphate translocator 2, chloroplastic, found in Arabidopsis thaliana (Mouse-ear cress).